A 1018-amino-acid chain; its full sequence is Fibronectin-binding protein A (1018 aa).

An N-terminal signal peptide occupies residues methionine 1 to alanine 36. The short motif at tyrosine 7–serine 18 is the YSIRK-G/S signaling motif element. The ligand-binding A region stretch occupies residues alanine 37–asparagine 511. 2 disordered regions span residues serine 38–glutamine 61 and alanine 78–threonine 195. Polar residues-rich tracts occupy residues glutamate 39–glutamine 61 and alanine 78–threonine 92. Positions threonine 112–valine 126 are enriched in basic and acidic residues. Polar residues predominate over residues threonine 129 to glutamine 139. A fibrinogen/elastin/tropoelastin-binding region spans residues glycine 194–asparagine 511. The segment at glycine 512 to threonine 872 is fibronectin-binding. A B-1 repeat occupies glutamate 545–isoleucine 574. The tract at residues glutamate 545–serine 604 is 2 X approximate tandem repeats. One copy of the B-2 repeat lies at glutamate 575–serine 604. 3 disordered regions span residues glycine 595–histidine 622, leucine 740–phenylalanine 813, and glutamate 827–phenylalanine 997. A D-1 repeat occupies glycine 745–histidine 782. Residues glycine 745–proline 878 form a 4 X approximate tandem repeats, D-3 repeat has more fibronectin-binding activity region. A D-2 repeat occupies glycine 783–histidine 820. The stretch at glycine 821 to serine 859 is one D-3 repeat. Basic and acidic residues predominate over residues glutamate 827–proline 838. A D-4; truncated repeat occupies glycine 860–proline 878. The segment covering proline 875–proline 938 has biased composition (pro residues). WR repeat units lie at residues proline 879–threonine 892, proline 893–threonine 906, proline 907–threonine 920, proline 921–lysine 934, and proline 935–lysine 948. The tract at residues proline 879–lysine 948 is 5 X tandem repeats, Pro-rich (WR). The LPXTG sorting signal signature appears at leucine 982 to glycine 986. Threonine 985 is subject to Pentaglycyl murein peptidoglycan amidated threonine. Residues glycine 986 to alanine 1018 constitute a propeptide, removed by sortase.

It is found in the secreted. Its subcellular location is the cell wall. In terms of biological role, possesses multiple, substituting fibronectin (Fn) binding regions, each capable of conferring adherence to both soluble and immobilized forms of Fn. This confers to S.aureus the ability to invade endothelial cells both in vivo and in vitro, without requiring additional factors, although in a slow and inefficient way through actin rearrangements in host cells. This invasion process is mediated by integrin alpha-5/beta-1. Promotes bacterial attachment to both soluble and immobilized forms of fibrinogen (Fg) by means of a unique binding site localized within the 17 C-terminal residues of the gamma-chain of human Fg. Both plasma proteins (Fn and Fg) function as a bridge between bacterium and host cell. Promotes attachment to immobilized elastin peptides in a dose-dependent and saturable manner. Promotes attachment to both full-length and segments of immobilized human tropoelastin at multiple sites in a dose and pH-dependent manner. Promotes adherence to and aggregation of activated platelets independently of other S.aureus surface molecules. Is a critical mediator implicated in the induction of experimental endocarditis in rats with catheter-induced aortic vegetations, promoting both colonization and persistence of the bacterium into the host. The polypeptide is Fibronectin-binding protein A (fnbA) (Staphylococcus aureus (strain NCTC 8325 / PS 47)).